The sequence spans 396 residues: Probable sugar efflux transporter (396 aa).

12 helical membrane passes run 15–35, 50–70, 81–101, 103–123, 136–156, 170–190, 209–229, 246–266, 275–295, 299–319, 333–353, and 364–384; these read VVTLAVAAFIFNTTEFVPVGL, VGIMLTIYAWVVALMSLPFML, LICLFVVFIASHVLSFLSWSF, VLVISRIGVAFAHAIFWSITA, AQALSLIATGTALAMVLGLPL, FFAIGIGALITLLCLIKLLPL, PALMSIYLLTVVVVTAHYTAY, FATALLLLLGGAGIIGSVIFG, ALVSTAIALLLVCLALLLPAA, IHLGVLSIFWGIAMMIIGLGM, VAMALFSGIFNIGIGAGALVG, and MIGYVGAVPAFAALIWSIIIF.

This sequence belongs to the major facilitator superfamily. SotB (TC 2.A.1.2) family.

The protein resides in the cell inner membrane. Its function is as follows. Involved in the efflux of sugars. The physiological role may be the reduction of the intracellular concentration of toxic sugars or sugar metabolites. This chain is Probable sugar efflux transporter, found in Escherichia coli O139:H28 (strain E24377A / ETEC).